The sequence spans 591 residues: MLRSHAAGSLRSSDAGQQVTLAGWVARRRDHGGVIFIDLRDASGITQVVFRDPDVLKQAHRLRAEFCVAVAGLVEIRPEGNANPEIATGDIEVNASSLTVLGESAPLPFQLDEPAGEELRLKYRYLDLRRDAPAAAIRLRSKVNAAAREVLDRHDFVEIETPTITRSTPEGARDFLVPARLHPGSFYALPQSPQLFKQLLMVAGMERYYQIARCYRDEDFRADRQPEFTQLDMEMSFVDAEDVIAISEEILAALWALIGYEIPRPIPRISYADAMARYGSDKPDLRFGLELVECSEFFKDTTFRVFQAPYVGAVVMPGGASQPRRTLDGWQEWAKQRGAKGLAYVLVGEDGELGGPVAKNLSEAERAGLAGHVGAAPGDCIFFAAGPAKPSRALLGAARSEIAHRLGLIDPQAWAFVWVVDPPLFEPADDATAAGDVAVGSGAWTAVHHAFTAPKPGYEDAIETDTGNVLADAYDIVCNGNEIGGGSIRIHRRDIQERVFAVMGLDNAEAREKFGFLLEAFTFGAPPHGGIAFGWDRINALLSRVDSIREVIAFPKTGGGVDPLTDAPAPITEQQRKESGIDVKPEPSKPH.

Glutamate 170 contacts L-aspartate. Positions 194 to 197 (QLFK) are aspartate. Arginine 216 is a binding site for L-aspartate. Residues 216–218 (RDE) and glutamine 225 contribute to the ATP site. Histidine 448 provides a ligand contact to L-aspartate. Glutamate 482 contributes to the ATP binding site. Arginine 489 contributes to the L-aspartate binding site. 534–537 (GWDR) is an ATP binding site. Residues 559 to 591 (GGVDPLTDAPAPITEQQRKESGIDVKPEPSKPH) are disordered. Residues 574–591 (QQRKESGIDVKPEPSKPH) are compositionally biased toward basic and acidic residues.

The protein belongs to the class-II aminoacyl-tRNA synthetase family. Type 1 subfamily. As to quaternary structure, homodimer.

It localises to the cytoplasm. The enzyme catalyses tRNA(Asx) + L-aspartate + ATP = L-aspartyl-tRNA(Asx) + AMP + diphosphate. Its function is as follows. Aspartyl-tRNA synthetase with relaxed tRNA specificity since it is able to aspartylate not only its cognate tRNA(Asp) but also tRNA(Asn). Reaction proceeds in two steps: L-aspartate is first activated by ATP to form Asp-AMP and then transferred to the acceptor end of tRNA(Asp/Asn). The sequence is that of Aspartate--tRNA(Asp/Asn) ligase from Mycobacterium avium (strain 104).